We begin with the raw amino-acid sequence, 405 residues long: Diaminohydroxyphosphoribosylamino-pyrimidine deaminase (405 aa).

Positions 256–383 (YNHEEYMLKA…DLLKKAGIVV (128 aa)) constitute a CMP/dCMP-type deaminase domain. His-305 is a Zn(2+) binding site. Glu-307 (proton donor) is an active-site residue. Zn(2+)-binding residues include Cys-335 and Cys-345.

The protein belongs to the cytidine and deoxycytidylate deaminase family. Requires Zn(2+) as cofactor.

Its subcellular location is the cytoplasm. The protein resides in the nucleus. The catalysed reaction is 2,5-diamino-6-hydroxy-4-(5-phosphoribosylamino)-pyrimidine + H2O + H(+) = 5-amino-6-(5-phospho-D-ribosylamino)uracil + NH4(+). It functions in the pathway cofactor biosynthesis; riboflavin biosynthesis; 5-amino-6-(D-ribitylamino)uracil from GTP: step 2/4. Its function is as follows. Involved in riboflavin biosynthesis. Converts 2,5-diamino-6-(ribosylamino)-4(3H)-pyrimidinone 5'-phosphate into 5-amino-6-(ribosylamino)-2,4(1H,3H)-pyrimidinedione 5'-phosphate. The sequence is that of Diaminohydroxyphosphoribosylamino-pyrimidine deaminase from Schizosaccharomyces pombe (strain 972 / ATCC 24843) (Fission yeast).